A 424-amino-acid chain; its full sequence is MALFVISINHKTAPVAIREKVAFGPEKLADALERLRCRPDIDEVTILSTCNRTELYCATPGEPDEISLIEWLGQYHQVSLTELKACCNIYNDEDAAQHMMRVASGIDSMVLGEPQILGQMKEAHASGRAAGSLGGPLDRLFQHAFAVAKRVRTETAIGENPVSVAYAAVSMASHIFSNMEQNTALLIGAGETIELVARHLYRAGVRSLIVANRTLSRARDLAAEFHGSAIGLSDIPEYLHRADIVIASTASPLPILGKGAVEKALKRRKHKPMFMVDIAVPRDIEEEVSELADVYLYTVDDLRQVIEDNMKSREGAAEEAERLIAAGAADFMYHLRALDSVSVLRRFRDQAEGVRDAELQKAIRLLNRGDDPESVLRMLAHGLTNKLIHHPTVQVRRASAEGRQEVTGWLRDLFQLPDEKVNND.

Residues 49-52 (TCNR), serine 108, 113-115 (EPQ), and glutamine 119 contribute to the substrate site. Residue cysteine 50 is the Nucleophile of the active site. An NADP(+)-binding site is contributed by 188-193 (GAGETI).

Belongs to the glutamyl-tRNA reductase family. In terms of assembly, homodimer.

It carries out the reaction (S)-4-amino-5-oxopentanoate + tRNA(Glu) + NADP(+) = L-glutamyl-tRNA(Glu) + NADPH + H(+). Its pathway is porphyrin-containing compound metabolism; protoporphyrin-IX biosynthesis; 5-aminolevulinate from L-glutamyl-tRNA(Glu): step 1/2. Its function is as follows. Catalyzes the NADPH-dependent reduction of glutamyl-tRNA(Glu) to glutamate 1-semialdehyde (GSA). This chain is Glutamyl-tRNA reductase, found in Hahella chejuensis (strain KCTC 2396).